The sequence spans 447 residues: Cysteine--tRNA ligase (447 aa).

C28 provides a ligand contact to Zn(2+). The short motif at 30–40 (PTVYNYIHIGN) is the 'HIGH' region element. Residues C211, H236, and E240 each contribute to the Zn(2+) site. Positions 268–272 (KMSKS) match the 'KMSKS' region motif. Position 271 (K271) interacts with ATP.

This sequence belongs to the class-I aminoacyl-tRNA synthetase family. As to quaternary structure, monomer. Zn(2+) is required as a cofactor.

The protein resides in the cytoplasm. The catalysed reaction is tRNA(Cys) + L-cysteine + ATP = L-cysteinyl-tRNA(Cys) + AMP + diphosphate. This is Cysteine--tRNA ligase from Streptococcus thermophilus (strain CNRZ 1066).